Consider the following 573-residue polypeptide: Probable CoA ligase CCL13 (573 aa).

Residues 216 to 224, 352 to 357, Asp-449, 461 to 464, and Lys-556 contribute to the ATP site; these read TSGTTARPK, HIYGLT, and LKDR. The SBD1 stretch occupies residues 284 to 352; it reads SPKAIFDNIH…MEEMGFQVNH (69 aa). Residues 353–429 are SBD2; that stretch reads IYGLTETHGP…FRGNTVMSGY (77 aa).

It belongs to the ATP-dependent AMP-binding enzyme family.

The protein localises to the cytoplasm. Its subcellular location is the cytosol. The protein is Probable CoA ligase CCL13 of Humulus lupulus (European hop).